The sequence spans 431 residues: MYRFAPSPTGDMHIGNLRAAIFNYICARQKNMDFILRIEDTDKARNIAGKEEEIKEILNLFSISWQHYYIQSENLKFHRQMALKLVSEKKAFACFCTEEELEAKKELAKKQGKAYRYDGTCEKLADIDVLECEKPFVIRLKKPTHTMKFTDFIKGELSFEPENIDSFVIMRTDKTPTYNFACAVDDMLENVTCIIRGEDHVSNTPKQEHIRASLGYNKAMTYAHLPIILNEEGVKMSKREAHSSVKWLLESGILPSAIANYLIMLGNKTPCEIFTLEKAIKWFDISKVSKAPARFDLKKLLQINREHIKMIKDDELNKILDLNKDLAPLAKFYTQEASTIKELKEKMQAIFNAKNFGEFETECKILKELLKDIELFENYEDFKNELLNKSNLKGKKFFMPLRIILTGNIHGPELSDLYPYIKNFIHELARI.

Positions 6–16 (PSPTGDMHIGN) match the 'HIGH' region motif. The 'KMSKS' region motif lies at 235–239 (KMSKR). Residue Lys238 coordinates ATP.

This sequence belongs to the class-I aminoacyl-tRNA synthetase family. Glutamate--tRNA ligase type 1 subfamily. Monomer.

The protein localises to the cytoplasm. The enzyme catalyses tRNA(Glu) + L-glutamate + ATP = L-glutamyl-tRNA(Glu) + AMP + diphosphate. Functionally, catalyzes the attachment of glutamate to tRNA(Glu) in a two-step reaction: glutamate is first activated by ATP to form Glu-AMP and then transferred to the acceptor end of tRNA(Glu). In Campylobacter jejuni (strain RM1221), this protein is Glutamate--tRNA ligase 1.